The primary structure comprises 191 residues: RRP15-like protein (191 aa).

The segment covering 1 to 11 (MSTKNRDRLVV) has biased composition (basic and acidic residues). Residues 1-52 (MSTKNRDRLVVTEDSDDDNEREEMSSGGESGEEGPSSVDGGAGDADETVAFP) are disordered. Residues 53 to 84 (AIERRKKKVIKKLTKKEQSLKKSVKEYRIKLA) are a coiled coil. Positions 119–153 (QKTMSDAVKEKMTARERREARQRFDGKNFDSDRFA) are enriched in basic and acidic residues. The tract at residues 119 to 191 (QKTMSDAVKE…IDTGNYSDED (73 aa)) is disordered. Positions 166-191 (GEDDDGEDQMDIGEEQIDTGNYSDED) are enriched in acidic residues.

It belongs to the RRP15 family.

The protein is RRP15-like protein of Caenorhabditis elegans.